The primary structure comprises 296 residues: Cytidine deaminase (296 aa).

2 consecutive CMP/dCMP-type deaminase domains span residues 47 to 167 (AESE…FGPS) and 186 to 296 (DSSD…LDPE). Position 88 to 90 (88 to 90 (NME)) interacts with substrate. Position 101 (histidine 101) interacts with Zn(2+). Catalysis depends on glutamate 103, which acts as the Proton donor. Residues cysteine 128 and cysteine 131 each coordinate Zn(2+).

It belongs to the cytidine and deoxycytidylate deaminase family. As to quaternary structure, homodimer. The cofactor is Zn(2+).

The catalysed reaction is cytidine + H2O + H(+) = uridine + NH4(+). It catalyses the reaction 2'-deoxycytidine + H2O + H(+) = 2'-deoxyuridine + NH4(+). Its function is as follows. This enzyme scavenges exogenous and endogenous cytidine and 2'-deoxycytidine for UMP synthesis. The protein is Cytidine deaminase of Shewanella sediminis (strain HAW-EB3).